The following is a 196-amino-acid chain: ATP-dependent Clp protease proteolytic subunit (196 aa).

S101 serves as the catalytic Nucleophile. H126 is a catalytic residue.

It belongs to the peptidase S14 family. Component of the chloroplastic Clp protease core complex.

It localises to the plastid. It is found in the chloroplast stroma. It catalyses the reaction Hydrolysis of proteins to small peptides in the presence of ATP and magnesium. alpha-casein is the usual test substrate. In the absence of ATP, only oligopeptides shorter than five residues are hydrolyzed (such as succinyl-Leu-Tyr-|-NHMec, and Leu-Tyr-Leu-|-Tyr-Trp, in which cleavage of the -Tyr-|-Leu- and -Tyr-|-Trp bonds also occurs).. Functionally, cleaves peptides in various proteins in a process that requires ATP hydrolysis. Has a chymotrypsin-like activity. Plays a major role in the degradation of misfolded proteins. The polypeptide is ATP-dependent Clp protease proteolytic subunit (Nicotiana tabacum (Common tobacco)).